A 327-amino-acid chain; its full sequence is uncharacterized protein (327 aa).

A run of 4 helical transmembrane segments spans residues 68 to 88 (SIPA…LFYP), 92 to 112 (FLHL…VDIF), 127 to 147 (WVAL…HLAA), and 148 to 168 (IAIW…YIIL).

It is found in the cell membrane. In terms of biological role, may act as a negative regulator for the transcription of mutY, fabL, sspE and yfhP. This is an uncharacterized protein from Bacillus subtilis (strain 168).